Consider the following 536-residue polypeptide: ATP synthase subunit alpha, mitochondrial (536 aa).

Residues 1-24 constitute a mitochondrion transit peptide; the sequence is MFKNALRRAGVAAPRISRVAQRGY. Position 195–202 (195–202) interacts with ATP; that stretch reads GDRQTGKT.

As to quaternary structure, F-type ATP synthases have 2 components, the catalytic core F(1) and the membrane-embedded component F(0), linked together by a central stalk and a peripheral stalk. The central stalk, also called rotor shaft, is often seen as part of F(1). The peripheral stalk is seen as part of F(0). F(0) contains the membrane channel next to the rotor. F-type ATP synthases form dimers but each monomer functions independently in ATP generation. The dimer consists of 17 different polypeptides: ATP1 (subunit alpha, 3 molecules per monomer, part of F(1)), ATP2 (subunit beta, 3 copies per monomer, part of F(1)), ATP3 (subunit gamma, part of the central stalk), ATP4 (subunit b, part of the peripheral stalk), ATP5/OSCP (subunit 5/OSCP, part of the peripheral stalk), ATP6 (subunit a, part of the peripheral stalk), ATP7 (subunit d, part of the peripheral stalk), ATP8 (subunit 8, part of the peripheral stalk), OLI1 (subunit c, part of the rotor, 10 molecules per monomer), ATP14 (subunit h, part of the peripheral stalk), ATP15 (subunit epsilon, part of the central stalk), ATP16 (subunit delta, part of the central stalk), ATP17 (subunit f, part of the peripheral stalk), ATP18 (subunit i/j, part of the peripheral stalk), ATP19 (subunit k, dimer-specific, at interface between monomers), ATP20 (subunit g, at interface between monomers), TIM11 (subunit e, at interface between monomers).

Its subcellular location is the mitochondrion inner membrane. Functionally, mitochondrial membrane ATP synthase (F(1)F(0) ATP synthase or Complex V) produces ATP from ADP in the presence of a proton gradient across the membrane which is generated by electron transport complexes of the respiratory chain. F-type ATP synthases consist of two structural domains, F(1) - containing the extramembraneous catalytic core, and F(0) - containing the membrane proton channel, linked together by a central stalk and a peripheral stalk. During catalysis, ATP synthesis in the catalytic domain of F(1) is coupled via a rotary mechanism of the central stalk subunits to proton translocation. Subunits alpha/ATP1 and beta/ATP2 form the catalytic core in F(1). Rotation of the central stalk against the surrounding alpha/ATP1(3)beta/ATP2(3) subunits leads to hydrolysis of ATP in three separate catalytic sites on the beta/ATP2 subunits. Subunit alpha/ATP1 does not bear the catalytic high-affinity ATP-binding sites. This is ATP synthase subunit alpha, mitochondrial from Yarrowia lipolytica (strain CLIB 122 / E 150) (Yeast).